Consider the following 366-residue polypeptide: Alanine racemase (366 aa).

The active-site Proton acceptor; specific for D-alanine is K33. K33 is subject to N6-(pyridoxal phosphate)lysine. R129 lines the substrate pocket. The active-site Proton acceptor; specific for L-alanine is Y253. Residue M301 coordinates substrate.

It belongs to the alanine racemase family. Pyridoxal 5'-phosphate serves as cofactor.

The enzyme catalyses L-alanine = D-alanine. The protein operates within amino-acid biosynthesis; D-alanine biosynthesis; D-alanine from L-alanine: step 1/1. Functionally, catalyzes the interconversion of L-alanine and D-alanine. May also act on other amino acids. The protein is Alanine racemase (alr) of Xanthomonas oryzae pv. oryzae (strain MAFF 311018).